A 464-amino-acid chain; its full sequence is Soluble pyridine nucleotide transhydrogenase (464 aa).

35–44 (DDRRQVGGNC) is an FAD binding site.

It belongs to the class-I pyridine nucleotide-disulfide oxidoreductase family. It depends on FAD as a cofactor.

The protein localises to the cytoplasm. The enzyme catalyses NAD(+) + NADPH = NADH + NADP(+). Functionally, conversion of NADPH, generated by peripheral catabolic pathways, to NADH, which can enter the respiratory chain for energy generation. This is Soluble pyridine nucleotide transhydrogenase from Pseudomonas putida (strain GB-1).